The sequence spans 250 residues: DNA repair protein RecO (250 aa).

This sequence belongs to the RecO family.

Functionally, involved in DNA repair and RecF pathway recombination. The polypeptide is DNA repair protein RecO (Rhodopseudomonas palustris (strain TIE-1)).